The primary structure comprises 287 residues: Telomere repeat-binding factor 5 (287 aa).

Residues 1–62 (MGNQKLKWTA…WRNLSVPPGT (62 aa)) enclose the HTH myb-type domain. The H-T-H motif DNA-binding region spans 28 to 58 (WKNILRDPEFADQLIHRSNIDLKDKWRNLSV). Positions 58 to 107 (VPPGTQSLTNKARPAKVKEEGDTPAADANDAVTIPRPIPTIPPPPGRRTL) are disordered. The segment covering 93–103 (RPIPTIPPPPG) has biased composition (pro residues). Positions 119–193 (NAPRYDGVIF…SIQNFYKIPD (75 aa)) constitute an H15 domain. A coiled-coil region spans residues 233–259 (AACKVVEAENKIDVAKLAAEEFEKMTK).

This sequence belongs to the histone H1/H5 family. SMH subfamily.

It localises to the nucleus. It is found in the chromosome. Its function is as follows. Binds preferentially double-stranded telomeric repeats. The chain is Telomere repeat-binding factor 5 from Arabidopsis thaliana (Mouse-ear cress).